A 402-amino-acid polypeptide reads, in one-letter code: Propionate kinase (402 aa).

ATP is bound by residues Asn-11 and Lys-18. Asn-11 provides a ligand contact to Mg(2+). A substrate-binding site is contributed by Arg-86. Catalysis depends on Asp-143, which acts as the Proton donor/acceptor. Residues His-175, 203-207 (HLGNG), 278-280 (DLR), and 326-330 (GIGEN) contribute to the ATP site.

This sequence belongs to the acetokinase family. TdcD subfamily. As to quaternary structure, homodimer. Mg(2+) is required as a cofactor.

It carries out the reaction propanoate + ATP = propanoyl phosphate + ADP. Its pathway is amino-acid degradation; L-threonine degradation via propanoate pathway; propanoate from L-threonine: step 4/4. Its function is as follows. Catalyzes the conversion of propionyl phosphate and ADP to propionate and ATP. The protein is Propionate kinase of Escherichia coli O6:H1 (strain CFT073 / ATCC 700928 / UPEC).